A 251-amino-acid polypeptide reads, in one-letter code: Hydroxyacylglutathione hydrolase (251 aa).

Residues His54, His56, Asp58, His59, His113, Asp140, and His178 each contribute to the Zn(2+) site.

This sequence belongs to the metallo-beta-lactamase superfamily. Glyoxalase II family. Monomer. Requires Zn(2+) as cofactor.

It catalyses the reaction an S-(2-hydroxyacyl)glutathione + H2O = a 2-hydroxy carboxylate + glutathione + H(+). It participates in secondary metabolite metabolism; methylglyoxal degradation; (R)-lactate from methylglyoxal: step 2/2. Functionally, thiolesterase that catalyzes the hydrolysis of S-D-lactoyl-glutathione to form glutathione and D-lactic acid. This is Hydroxyacylglutathione hydrolase from Synechococcus sp. (strain CC9902).